Reading from the N-terminus, the 104-residue chain is Complex III assembly factor LYRM7 (104 aa).

At S60 the chain carries Phosphoserine.

The protein belongs to the complex I LYR family. As to quaternary structure, interacts with UQCRFS1.

Its subcellular location is the mitochondrion matrix. Functionally, assembly factor required for Rieske Fe-S protein UQCRFS1 incorporation into the cytochrome b-c1 (CIII) complex. Functions as a chaperone, binding to this subunit within the mitochondrial matrix and stabilizing it prior to its translocation and insertion into the late CIII dimeric intermediate within the mitochondrial inner membrane. The protein is Complex III assembly factor LYRM7 (LYRM7) of Bos taurus (Bovine).